Here is a 132-residue protein sequence, read N- to C-terminus: Probable prefoldin subunit 4 (132 aa).

Belongs to the prefoldin subunit beta family. As to quaternary structure, heterohexamer of two PFD-alpha type and four PFD-beta type subunits.

Its function is as follows. Binds specifically to cytosolic chaperonin (c-CPN) and transfers target proteins to it. Binds to nascent polypeptide chain and promotes folding in an environment in which there are many competing pathways for nonnative proteins. This Dictyostelium discoideum (Social amoeba) protein is Probable prefoldin subunit 4 (pfdn4).